A 332-amino-acid chain; its full sequence is tRNA U34 carboxymethyltransferase (332 aa).

Carboxy-S-adenosyl-L-methionine is bound by residues Lys-96, Trp-110, Lys-115, Gly-135, 157-159, 190-191, Met-205, Tyr-209, and Arg-324; these read DPT and IE.

Belongs to the class I-like SAM-binding methyltransferase superfamily. CmoB family. Homotetramer.

The catalysed reaction is carboxy-S-adenosyl-L-methionine + 5-hydroxyuridine(34) in tRNA = 5-carboxymethoxyuridine(34) in tRNA + S-adenosyl-L-homocysteine + H(+). Catalyzes carboxymethyl transfer from carboxy-S-adenosyl-L-methionine (Cx-SAM) to 5-hydroxyuridine (ho5U) to form 5-carboxymethoxyuridine (cmo5U) at position 34 in tRNAs. This Alteromonas mediterranea (strain DSM 17117 / CIP 110805 / LMG 28347 / Deep ecotype) protein is tRNA U34 carboxymethyltransferase.